We begin with the raw amino-acid sequence, 355 residues long: Histidine biosynthesis bifunctional protein HisB (355 aa).

The histidinol-phosphatase stretch occupies residues 1 to 166; that stretch reads MKQKILFIDR…DITKEIIKRN (166 aa). Catalysis depends on Asp-9, which acts as the Nucleophile. Asp-9 and Asp-11 together coordinate Mg(2+). Asp-11 acts as the Proton donor in catalysis. Zn(2+) is bound by residues Cys-93, His-95, Cys-101, and Cys-103. Residue Asp-130 participates in Mg(2+) binding. Residues 167 to 355 form an imidazoleglycerol-phosphate dehydratase region; the sequence is RYREVIRETK…NTLPTSKGIL (189 aa).

In the N-terminal section; belongs to the histidinol-phosphatase family. This sequence in the C-terminal section; belongs to the imidazoleglycerol-phosphate dehydratase family. The cofactor is Mg(2+). Zn(2+) serves as cofactor.

The protein resides in the cytoplasm. The enzyme catalyses D-erythro-1-(imidazol-4-yl)glycerol 3-phosphate = 3-(imidazol-4-yl)-2-oxopropyl phosphate + H2O. It catalyses the reaction L-histidinol phosphate + H2O = L-histidinol + phosphate. It functions in the pathway amino-acid biosynthesis; L-histidine biosynthesis; L-histidine from 5-phospho-alpha-D-ribose 1-diphosphate: step 6/9. Its pathway is amino-acid biosynthesis; L-histidine biosynthesis; L-histidine from 5-phospho-alpha-D-ribose 1-diphosphate: step 8/9. The sequence is that of Histidine biosynthesis bifunctional protein HisB from Buchnera aphidicola subsp. Schizaphis graminum (strain Sg).